The primary structure comprises 123 residues: uncharacterized protein (123 aa).

The chain crosses the membrane as a helical span at residues 5-25 (GTLVIIFAIVLILCIMLLFFY). The interval 32–53 (KPSVLPPPIPPPTPPPSKKKYD) is disordered. The segment covering 35-47 (VLPPPIPPPTPPP) has biased composition (pro residues).

It belongs to the asfivirus CP123L family.

The protein resides in the host membrane. It is found in the virion. This is an uncharacterized protein from Ornithodoros (relapsing fever ticks).